The primary structure comprises 354 residues: Phospho-N-acetylmuramoyl-pentapeptide-transferase (354 aa).

Transmembrane regions (helical) follow at residues 23–43, 66–86, 88–108, 130–150, 161–181, 193–213, 230–250, 257–277, 282–302, and 331–351; these read FSFF…IAWA, TPTM…LLCA, LDNV…ALGF, LAVQ…HGEL, FALL…IVAA, GLAS…AYIC, VGET…FLWF, VFMG…MGVM, ILLI…ILQV, and KIIV…LTAL.

This sequence belongs to the glycosyltransferase 4 family. MraY subfamily. The cofactor is Mg(2+).

It is found in the cell inner membrane. The enzyme catalyses UDP-N-acetyl-alpha-D-muramoyl-L-alanyl-gamma-D-glutamyl-meso-2,6-diaminopimeloyl-D-alanyl-D-alanine + di-trans,octa-cis-undecaprenyl phosphate = di-trans,octa-cis-undecaprenyl diphospho-N-acetyl-alpha-D-muramoyl-L-alanyl-D-glutamyl-meso-2,6-diaminopimeloyl-D-alanyl-D-alanine + UMP. Its pathway is cell wall biogenesis; peptidoglycan biosynthesis. Functionally, catalyzes the initial step of the lipid cycle reactions in the biosynthesis of the cell wall peptidoglycan: transfers peptidoglycan precursor phospho-MurNAc-pentapeptide from UDP-MurNAc-pentapeptide onto the lipid carrier undecaprenyl phosphate, yielding undecaprenyl-pyrophosphoryl-MurNAc-pentapeptide, known as lipid I. The protein is Phospho-N-acetylmuramoyl-pentapeptide-transferase of Campylobacter curvus (strain 525.92).